Consider the following 263-residue polypeptide: 3'-5' ssDNA/RNA exonuclease TatD (263 aa).

Residues Glu91, His127, and His152 each coordinate a divalent metal cation.

The protein belongs to the metallo-dependent hydrolases superfamily. TatD-type hydrolase family. TatD subfamily. As to quaternary structure, monomer. It depends on Mg(2+) as a cofactor.

Its subcellular location is the cytoplasm. Functionally, 3'-5' exonuclease that prefers single-stranded DNA and RNA. May play a role in the H(2)O(2)-induced DNA damage repair. This chain is 3'-5' ssDNA/RNA exonuclease TatD, found in Citrobacter rodentium (strain ICC168) (Citrobacter freundii biotype 4280).